Here is a 351-residue protein sequence, read N- to C-terminus: Probable V-type proton ATPase subunit d (351 aa).

The protein belongs to the V-ATPase V0D/AC39 subunit family. V-ATPase is a heteromultimeric enzyme composed of a peripheral catalytic V1 complex (components A to H) attached to an integral membrane V0 proton pore complex (components: a, c, c', c'' and d).

In terms of biological role, subunit of the integral membrane V0 complex of vacuolar ATPase. Vacuolar ATPase is responsible for acidifying a variety of intracellular compartments in eukaryotic cells, thus providing most of the energy required for transport processes in the vacuolar system. This Oryza sativa subsp. japonica (Rice) protein is Probable V-type proton ATPase subunit d.